A 321-amino-acid chain; its full sequence is Cytochrome c biogenesis protein CcsA (321 aa).

Helical transmembrane passes span 17-37 (VVSI…IIGL), 46-63 (MTTF…WIYL), 71-91 (LYES…VPYF), 98-118 (LKAI…SGLL), 143-163 (MVLG…LLVI), 225-245 (IISL…VWAN), 259-273 (TWAF…IYLH), and 286-306 (AIVA…VNLL).

The protein belongs to the CcmF/CycK/Ccl1/NrfE/CcsA family. As to quaternary structure, may interact with Ccs1.

It localises to the plastid. The protein localises to the chloroplast thylakoid membrane. In terms of biological role, required during biogenesis of c-type cytochromes (cytochrome c6 and cytochrome f) at the step of heme attachment. The polypeptide is Cytochrome c biogenesis protein CcsA (Morus indica (Mulberry)).